Consider the following 714-residue polypeptide: Elongation factor G-like protein (714 aa).

One can recognise a tr-type G domain in the interval 21-289 (GGVRNVVLVG…VATRGFPSPM (269 aa)). A G1 region spans residues 30–37 (GPSGGGKT). Residue 30–37 (GPSGGGKT) participates in GTP binding. The segment at 73–77 (QRSVG) is G2. A G3 region spans residues 94–97 (DTPG). GTP-binding positions include 94 to 98 (DTPGY) and 148 to 151 (TKLD). Residues 148–151 (TKLD) are G4. A G5 region spans residues 267-269 (CSS).

Belongs to the TRAFAC class translation factor GTPase superfamily. Classic translation factor GTPase family. EF-G/EF-2 subfamily.

The chain is Elongation factor G-like protein from Mycobacterium tuberculosis (strain ATCC 25618 / H37Rv).